The sequence spans 271 residues: uncharacterized protein (271 aa).

The segment at 1 to 202 (MLNSPGTRRP…APSSALSHQG (202 aa)) is disordered. Over residues 10 to 23 (PVKEAQKYGEDSQK) the composition is skewed to basic and acidic residues. 2 stretches are compositionally biased toward low complexity: residues 33–50 (RSSV…SSSP) and 59–73 (GRPS…TSAP). Residues 92 to 101 (TRSSANQLPQ) show a composition bias toward polar residues. Residues 121 to 142 (LRRRSHGDRCVPRSRRRPRPRP) show a composition bias toward basic residues.

This is an uncharacterized protein from Homo sapiens (Human).